The chain runs to 503 residues: Maturase K (503 aa).

The protein belongs to the intron maturase 2 family. MatK subfamily.

It is found in the plastid. The protein localises to the chloroplast. In terms of biological role, usually encoded in the trnK tRNA gene intron. Probably assists in splicing its own and other chloroplast group II introns. The protein is Maturase K of Cercocarpus betuloides (Mountain mahogany).